The sequence spans 381 residues: Alkanesulfonate monooxygenase (381 aa).

The protein belongs to the SsuD family. Homotetramer.

It catalyses the reaction an alkanesulfonate + FMNH2 + O2 = an aldehyde + FMN + sulfite + H2O + 2 H(+). In terms of biological role, catalyzes the desulfonation of aliphatic sulfonates. The chain is Alkanesulfonate monooxygenase from Escherichia coli (strain SMS-3-5 / SECEC).